We begin with the raw amino-acid sequence, 277 residues long: Putative hydro-lyase SCO1412 (277 aa).

This sequence belongs to the D-glutamate cyclase family.

The chain is Putative hydro-lyase SCO1412 from Streptomyces coelicolor (strain ATCC BAA-471 / A3(2) / M145).